The following is a 477-amino-acid chain: Bifunctional protein HldE (477 aa).

Residues 1 to 318 are ribokinase; sequence MKVNLPAFER…ENAVRGRADT (318 aa). Residue 195–198 participates in ATP binding; that stretch reads NLSE. D264 is a catalytic residue. The cytidylyltransferase stretch occupies residues 344 to 477; that stretch reads MTNGVFDILH…IKKIQTESEK (134 aa).

It in the N-terminal section; belongs to the carbohydrate kinase PfkB family. In the C-terminal section; belongs to the cytidylyltransferase family. As to quaternary structure, homodimer.

It carries out the reaction D-glycero-beta-D-manno-heptose 7-phosphate + ATP = D-glycero-beta-D-manno-heptose 1,7-bisphosphate + ADP + H(+). The catalysed reaction is D-glycero-beta-D-manno-heptose 1-phosphate + ATP + H(+) = ADP-D-glycero-beta-D-manno-heptose + diphosphate. Its pathway is nucleotide-sugar biosynthesis; ADP-L-glycero-beta-D-manno-heptose biosynthesis; ADP-L-glycero-beta-D-manno-heptose from D-glycero-beta-D-manno-heptose 7-phosphate: step 1/4. It participates in nucleotide-sugar biosynthesis; ADP-L-glycero-beta-D-manno-heptose biosynthesis; ADP-L-glycero-beta-D-manno-heptose from D-glycero-beta-D-manno-heptose 7-phosphate: step 3/4. In terms of biological role, catalyzes the phosphorylation of D-glycero-D-manno-heptose 7-phosphate at the C-1 position to selectively form D-glycero-beta-D-manno-heptose-1,7-bisphosphate. Catalyzes the ADP transfer from ATP to D-glycero-beta-D-manno-heptose 1-phosphate, yielding ADP-D-glycero-beta-D-manno-heptose. The sequence is that of Bifunctional protein HldE from Salmonella enteritidis PT4 (strain P125109).